Here is a 492-residue protein sequence, read N- to C-terminus: Pre-mRNA-splicing factor sap61 (492 aa).

The segment at 243–267 (FYCEVCQKFFGKITVFEAHKKSKAH) adopts a C2H2-type zinc-finger fold. Disordered regions lie at residues 268 to 291 (NKAV…KQKG) and 337 to 365 (AAER…QDDE). A compositionally biased stretch (low complexity) spans 276–286 (SSSPSTTSNTN). The segment covering 345–354 (QSTPSVSVEG) has biased composition (polar residues). A compositionally biased stretch (acidic residues) spans 355 to 365 (NQDEESDQDDE). Ser-360 is subject to Phosphoserine. The Matrin-type zinc-finger motif lies at 397–428 (FPCEICGNYVYMGRKAFDKHFTEQRHIYGLKC).

It belongs to the SF3A3 family. In terms of assembly, belongs to the 40S cdc5-associated complex (or cwf complex), a spliceosome sub-complex reminiscent of a late-stage spliceosome composed of the U2, U5 and U6 snRNAs and at least brr2, cdc5, cwf2/prp3, cwf3/syf1, cwf4/syf3, cwf5/ecm2, spp42/cwf6, cwf7/spf27, cwf8, cwf9, cwf10, cwf11, cwf12, prp45/cwf13, cwf14, cwf15, cwf16, cwf17, cwf18, cwf19, cwf20, cwf21, cwf22, cwf23, cwf24, cwf25, cwf26, cyp7/cwf27, cwf28, cwf29/ist3, lea1, msl1, prp5/cwf1, prp10, prp12/sap130, prp17, prp22, sap61, sap62, sap114, sap145, slu7, smb1, smd1, smd3, smf1, smg1 and syf2.

Its subcellular location is the nucleus. The protein resides in the cytoplasm. Involved in mRNA splicing where it associates with cdc5 and the other cwf proteins as part of the spliceosome. The chain is Pre-mRNA-splicing factor sap61 (sap61) from Schizosaccharomyces pombe (strain 972 / ATCC 24843) (Fission yeast).